The chain runs to 978 residues: MAAAPPLAAGLRPAMAAAQAPVVAAAWGVGARRGAALSSSARCRALRLSRGGGGGRDGWVPPPVVGRMPPRTLSVRCAASNGRITQQEFTEMAWQSIVSSPEVAKESKHQIVETEHLMKSLLEQRNGLARRIFSKAGVDNTRLLDATEKFIQRQPKVLGEDPGSMLGRDLEALIQRARDFKKEYGDSFVSVEHLVLGFAEDKRFGRQLFKDFQITVQSLKTAIESIRGKQNVIDQDPEGKYEALDKYGKDLTAMARQGKLDPVIGRDDEIRRCIQILSRRTKNNPVLIGEPGVGKTAIAEGLAQRIVQGDVPQALTNRRLIALDMGALIAGAKYRGEFEDRLKAVLKEVTDSDGQTILFIDEIHTVVGAGATNGAMDAGNLLKPMLGRGELRCIGATTLDEYRKYIEKDPALERRFQQVYVDQPSVEDTISILRGLRERYELHHGVRISDSALVAAALLSDRYISGRFLPDKAIDLVDESAAKLKMEITSKPTALDEIDRAVIKLEMERLSLTNDTDKASRDRLSRIEAELSLLKEKQKDLTEQWEREKSVMTKIQSIKEEIDRVNVEIQQAEREYDLNRAAELKYGSLNALQRQLQTTEKELDEYQSSGKSMLREEVTQDDIAEIVSRWTGIPVSKLKQSDREKLLYLEEELHKRVVGQDPAVKAVSEAIQRSRAGLSDPNRPIASFMFMGPTGVGKTELAKALAAFMFNTEEAVVRIDMSEYMEKHSVSRLIGAPPGYVGYEEGGQLTEAVRRRPYSIILFDEIEKAHGDVFNVFLQILDDGRVTDSQGRKVSFTNSIIIMTSNVGSQFILNMDEEGGSTDSAYENIKKRVMDAARSVFRPEFMNRIDEYIVFKPLEREQINSIVKLQLARVQKRIADRKIKLEVSPGAVEFLGSLGYDPNYGARPVKRVIQQYVENELAKGILRGDFKDEDSILVDTQVTVPSNGQLPQQKLVFHKMSEESAPAAAEDEKFLPAV.

The N-terminal 76 residues, 1–76 (MAAAPPLAAG…RMPPRTLSVR (76 aa)), are a transit peptide targeting the chloroplast. The region spanning 85–229 (TQQEFTEMAW…KTAIESIRGK (145 aa)) is the Clp R domain. 2 repeat regions span residues 89–154 (FTEM…IQRQ) and 166–229 (LGRD…IRGK). The interval 244 to 492 (LDKYGKDLTA…KLKMEITSKP (249 aa)) is i. Residues 289–296 (GEPGVGKT) and 692–699 (GPTGVGKT) contribute to the ATP site. Positions 618 to 809 (VTQDDIAEIV…IIIMTSNVGS (192 aa)) are II.

It belongs to the ClpA/ClpB family.

The protein localises to the plastid. It is found in the chloroplast. Its function is as follows. Molecular chaperone that may play a role in chloroplast development. The sequence is that of Chaperone protein ClpB2, chloroplastic (CLPB2) from Oryza sativa subsp. japonica (Rice).